Reading from the N-terminus, the 100-residue chain is Urease subunit gamma (100 aa).

Belongs to the urease gamma subunit family. Heterotrimer of UreA (gamma), UreB (beta) and UreC (alpha) subunits. Three heterotrimers associate to form the active enzyme.

The protein localises to the cytoplasm. It carries out the reaction urea + 2 H2O + H(+) = hydrogencarbonate + 2 NH4(+). The protein operates within nitrogen metabolism; urea degradation; CO(2) and NH(3) from urea (urease route): step 1/1. The polypeptide is Urease subunit gamma (Rhizobium meliloti (strain 1021) (Ensifer meliloti)).